The sequence spans 317 residues: MAVQGSQRRLLGSLNSTPTAIPQLGLAANQTGARCLEVSIPDGLFLSLGLVSLVENMLVVATIAKNRNLHSPMYCFICCLALSDLLVSGSNVLETAVILLLEAGALVARAAVLQQVDNVIDVITCSSMLSSLCFLGAIAVDRYISIFYALRYHSIVTLPRARRAIAAIWVASVLFSTLFIAYCDHTAVLLCLVVFFLAVLVLMAVLYVHMLARACQHAQGIARLHKRQRPVHQGFGLKGAVTLTILLGIFFLCWGPFFLHLTLIVLCPEHPTCGCIFKNFNLFLALIICNAIIDPLIYAFHSQELRRTLKEVLTCSW.

Residues 1–37 lie on the Extracellular side of the membrane; it reads MAVQGSQRRLLGSLNSTPTAIPQLGLAANQTGARCLE. N-linked (GlcNAc...) asparagine glycosylation is present at asparagine 29. A helical membrane pass occupies residues 38–63; that stretch reads VSIPDGLFLSLGLVSLVENMLVVATI. Topologically, residues 64–72 are cytoplasmic; the sequence is AKNRNLHSP. The chain crosses the membrane as a helical span at residues 73-93; the sequence is MYCFICCLALSDLLVSGSNVL. At 94–118 the chain is on the extracellular side; that stretch reads ETAVILLLEAGALVARAAVLQQVDN. Residues 119–140 traverse the membrane as a helical segment; that stretch reads VIDVITCSSMLSSLCFLGAIAV. Residues 141-163 lie on the Cytoplasmic side of the membrane; that stretch reads DRYISIFYALRYHSIVTLPRARR. Residues 164–183 traverse the membrane as a helical segment; it reads AIAAIWVASVLFSTLFIAYC. The Extracellular portion of the chain corresponds to 184 to 191; it reads DHTAVLLC. Residues 192–211 form a helical membrane-spanning segment; sequence LVVFFLAVLVLMAVLYVHML. Topologically, residues 212–240 are cytoplasmic; the sequence is ARACQHAQGIARLHKRQRPVHQGFGLKGA. Residues 241–266 traverse the membrane as a helical segment; sequence VTLTILLGIFFLCWGPFFLHLTLIVL. Residues 267 to 279 are Extracellular-facing; sequence CPEHPTCGCIFKN. The helical transmembrane segment at 280-300 threads the bilayer; the sequence is FNLFLALIICNAIIDPLIYAF. Residues 301–317 lie on the Cytoplasmic side of the membrane; sequence HSQELRRTLKEVLTCSW. Cysteine 315 carries the S-palmitoyl cysteine lipid modification.

Belongs to the G-protein coupled receptor 1 family. In terms of assembly, interacts with MGRN1, but does not undergo MGRN1-mediated ubiquitination; this interaction competes with GNAS-binding and thus inhibits agonist-induced cAMP production. Interacts with OPN3; the interaction results in a decrease in MC1R-mediated cAMP signaling and ultimately a decrease in melanin production in melanocytes.

The protein resides in the cell membrane. Receptor for MSH (alpha, beta and gamma) and ACTH. The activity of this receptor is mediated by G proteins which activate adenylate cyclase. Mediates melanogenesis, the production of eumelanin (black/brown) and phaeomelanin (red/yellow), via regulation of cAMP signaling in melanocytes. The sequence is that of Melanocyte-stimulating hormone receptor (MC1R) from Pan troglodytes (Chimpanzee).